The chain runs to 264 residues: 3-methyl-2-oxobutanoate hydroxymethyltransferase (264 aa).

Mg(2+) is bound by residues Asp45 and Asp84. Residues 45 to 46, Asp84, and Lys112 contribute to the 3-methyl-2-oxobutanoate site; that span reads DS. Glu114 serves as a coordination point for Mg(2+). Catalysis depends on Glu181, which acts as the Proton acceptor.

It belongs to the PanB family. As to quaternary structure, homodecamer; pentamer of dimers. Requires Mg(2+) as cofactor.

It is found in the cytoplasm. The enzyme catalyses 3-methyl-2-oxobutanoate + (6R)-5,10-methylene-5,6,7,8-tetrahydrofolate + H2O = 2-dehydropantoate + (6S)-5,6,7,8-tetrahydrofolate. Its pathway is cofactor biosynthesis; (R)-pantothenate biosynthesis; (R)-pantoate from 3-methyl-2-oxobutanoate: step 1/2. Functionally, catalyzes the reversible reaction in which hydroxymethyl group from 5,10-methylenetetrahydrofolate is transferred onto alpha-ketoisovalerate to form ketopantoate. This chain is 3-methyl-2-oxobutanoate hydroxymethyltransferase, found in Erwinia tasmaniensis (strain DSM 17950 / CFBP 7177 / CIP 109463 / NCPPB 4357 / Et1/99).